Consider the following 630-residue polypeptide: 1-deoxy-D-xylulose-5-phosphate synthase (630 aa).

Thiamine diphosphate is bound by residues histidine 72 and 113 to 115 (GHS). Aspartate 144 contributes to the Mg(2+) binding site. Thiamine diphosphate contacts are provided by residues 145–146 (GA), asparagine 173, tyrosine 284, and glutamate 367. Asparagine 173 is a Mg(2+) binding site.

This sequence belongs to the transketolase family. DXPS subfamily. In terms of assembly, homodimer. It depends on Mg(2+) as a cofactor. Thiamine diphosphate serves as cofactor.

It carries out the reaction D-glyceraldehyde 3-phosphate + pyruvate + H(+) = 1-deoxy-D-xylulose 5-phosphate + CO2. The protein operates within metabolic intermediate biosynthesis; 1-deoxy-D-xylulose 5-phosphate biosynthesis; 1-deoxy-D-xylulose 5-phosphate from D-glyceraldehyde 3-phosphate and pyruvate: step 1/1. Its function is as follows. Catalyzes the acyloin condensation reaction between C atoms 2 and 3 of pyruvate and glyceraldehyde 3-phosphate to yield 1-deoxy-D-xylulose-5-phosphate (DXP). The sequence is that of 1-deoxy-D-xylulose-5-phosphate synthase from Bacillus cytotoxicus (strain DSM 22905 / CIP 110041 / 391-98 / NVH 391-98).